A 216-amino-acid chain; its full sequence is Adenylate kinase (216 aa).

10–15 (GAGKGT) contacts ATP. The segment at 30–59 (STGDIFRKNISENTPLGIEAKGYIDNGQLV) is NMP. AMP contacts are provided by residues Thr31, Arg36, 57-59 (QLV), 85-88 (GFPR), and Gln92. Residues 126 to 163 (GRRVCPSCGASYHVKFNPPTNEGKCDLCGSEVIQRKDD) are LID. ATP is bound at residue Arg127. Zn(2+) is bound by residues Cys130 and Cys133. 136 to 137 (SY) contacts ATP. Residues Cys150 and Cys153 each coordinate Zn(2+). AMP contacts are provided by Arg160 and Arg171. Lys199 is a binding site for ATP.

It belongs to the adenylate kinase family. Monomer.

Its subcellular location is the cytoplasm. It catalyses the reaction AMP + ATP = 2 ADP. Its pathway is purine metabolism; AMP biosynthesis via salvage pathway; AMP from ADP: step 1/1. In terms of biological role, catalyzes the reversible transfer of the terminal phosphate group between ATP and AMP. Plays an important role in cellular energy homeostasis and in adenine nucleotide metabolism. In Clostridium beijerinckii (strain ATCC 51743 / NCIMB 8052) (Clostridium acetobutylicum), this protein is Adenylate kinase.